A 331-amino-acid chain; its full sequence is MATDFSSIPIIDISPLLAKADDPKMAEDPGVLEVVKQLDKACTEAGFFYVKGHGFPETLLKEVRDVTRRFFELSYEEKAKIKMTPAAGFRGYQRLGENITKGVPDMHEAIDCYREVTKDMYGDLGKVMEGSNQWPQNPPTFKVLMEEYVSLCRDLARKIMRGIALALGGSPNEFEGQRAGDPFWVMRLIGYPGVSSVNGTNVHKNDIGCGAHTDYGLLTLLNQDDDVNALQVRNLSGEWITAPPVPGTFVCNIGDMLKIYSNGLYESTLHRVINNNSKYRVSVVYFYETNFDTAVEPLDTHKTRANGNKEFKRAVYGEHLTGKVLTNFVDL.

One can recognise a Fe2OG dioxygenase domain in the interval 182-289 (PFWVMRLIGY…RVSVVYFYET (108 aa)). Fe cation is bound by residues histidine 212, aspartate 214, and histidine 270. Position 280 (arginine 280) interacts with 2-oxoglutarate.

It belongs to the iron/ascorbate-dependent oxidoreductase family. The cofactor is Fe(2+).

It localises to the cytoplasm. It is found in the cytosol. It catalyses the reaction L-homoarginine + 2-oxoglutarate + O2 = 6-hydroxy-L-homoarginine + succinate + CO2. In terms of biological role, 2-oxoglutarate-dependent dioxygenase catalyzing homoarginine 6-hydroxylation thus producing 6-hydroxy-L-homoarginine. Guanidine (Gd) is in turn synthesized by the spontaneous conversion of 6-hydroxy-L-homoarginine to (S)-2-amino-6-oxohexanoate (RHEA:79843); guanidine is a nitrogen-rich compound that can serve as a defense or signaling substance. This chain is Homoarginine-6-hydroxylase 2-ODD-C23, found in Glycine max (Soybean).